A 433-amino-acid polypeptide reads, in one-letter code: Serine--tRNA ligase (433 aa).

L-serine is bound at residue 239–241; it reads TAE. Position 270–272 (270–272) interacts with ATP; sequence RSE. Glutamate 293 contacts L-serine. 357–360 is an ATP binding site; sequence EISS. Residue serine 393 participates in L-serine binding.

This sequence belongs to the class-II aminoacyl-tRNA synthetase family. Type-1 seryl-tRNA synthetase subfamily. As to quaternary structure, homodimer. The tRNA molecule binds across the dimer.

It localises to the cytoplasm. The catalysed reaction is tRNA(Ser) + L-serine + ATP = L-seryl-tRNA(Ser) + AMP + diphosphate + H(+). It catalyses the reaction tRNA(Sec) + L-serine + ATP = L-seryl-tRNA(Sec) + AMP + diphosphate + H(+). It functions in the pathway aminoacyl-tRNA biosynthesis; selenocysteinyl-tRNA(Sec) biosynthesis; L-seryl-tRNA(Sec) from L-serine and tRNA(Sec): step 1/1. In terms of biological role, catalyzes the attachment of serine to tRNA(Ser). Is also able to aminoacylate tRNA(Sec) with serine, to form the misacylated tRNA L-seryl-tRNA(Sec), which will be further converted into selenocysteinyl-tRNA(Sec). In Sorangium cellulosum (strain So ce56) (Polyangium cellulosum (strain So ce56)), this protein is Serine--tRNA ligase.